The chain runs to 463 residues: ATP sulfurylase 1, chloroplastic (463 aa).

Residues Met-1–Ala-48 constitute a chloroplast transit peptide.

The protein belongs to the sulfate adenylyltransferase family. In terms of assembly, homotetramer.

It localises to the plastid. The protein resides in the chloroplast stroma. The catalysed reaction is sulfate + ATP + H(+) = adenosine 5'-phosphosulfate + diphosphate. It functions in the pathway sulfur metabolism; hydrogen sulfide biosynthesis; sulfite from sulfate: step 1/3. Its function is as follows. Mediates selenate (Se) reduction, and promotes Se and sulfur (S) uptake and assimilation. The chain is ATP sulfurylase 1, chloroplastic (APS1) from Arabidopsis thaliana (Mouse-ear cress).